Here is a 246-residue protein sequence, read N- to C-terminus: Isoprenyl transferase (246 aa).

Residue aspartate 18 is part of the active site. Aspartate 18 contacts Mg(2+). Substrate-binding positions include glycine 19–arginine 22, tryptophan 23, arginine 31, histidine 35, and serine 63–glutamate 65. The active-site Proton acceptor is the asparagine 66. Substrate is bound by residues tryptophan 67, arginine 69, arginine 186, and arginine 192–serine 194. Glutamate 205 contacts Mg(2+).

The protein belongs to the UPP synthase family. Homodimer. It depends on Mg(2+) as a cofactor.

In terms of biological role, catalyzes the condensation of isopentenyl diphosphate (IPP) with allylic pyrophosphates generating different type of terpenoids. The protein is Isoprenyl transferase of Geobacter sulfurreducens (strain ATCC 51573 / DSM 12127 / PCA).